We begin with the raw amino-acid sequence, 87 residues long: Putative regulatory protein syc0519_c (87 aa).

This sequence belongs to the RemA family.

In Synechococcus sp. (strain ATCC 27144 / PCC 6301 / SAUG 1402/1) (Anacystis nidulans), this protein is Putative regulatory protein syc0519_c.